The chain runs to 233 residues: Orotidine 5'-phosphate decarboxylase (233 aa).

Substrate is bound by residues Asp-13, Lys-35, 62–71 (DLKFHDIPNT), Thr-122, Arg-182, Gln-191, Gly-211, and Arg-212. Lys-64 functions as the Proton donor in the catalytic mechanism.

This sequence belongs to the OMP decarboxylase family. Type 1 subfamily. As to quaternary structure, homodimer.

It carries out the reaction orotidine 5'-phosphate + H(+) = UMP + CO2. It participates in pyrimidine metabolism; UMP biosynthesis via de novo pathway; UMP from orotate: step 2/2. Catalyzes the decarboxylation of orotidine 5'-monophosphate (OMP) to uridine 5'-monophosphate (UMP). The sequence is that of Orotidine 5'-phosphate decarboxylase from Pseudomonas putida (strain W619).